We begin with the raw amino-acid sequence, 495 residues long: GTPase Der (495 aa).

The EngA-type G 1 domain occupies 3 to 178; sequence AKIALVGRPN…EMRDLLPEED (176 aa). Residues 9–16, 57–61, and 130–133 contribute to the GTP site; these read GRPNVGKS, DTGGI, and NKVD. Positions 190 to 227 are disordered; the sequence is TAVASADADVDADVETEGGTSASETEEGITEETVEDEP. Residues 213 to 227 are compositionally biased toward acidic residues; that stretch reads ETEEGITEETVEDEP. An EngA-type G 2 domain is found at 231–404; it reads LRLCMLGRPN…LAARIRRECS (174 aa). GTP contacts are provided by residues 237-244, 284-288, and 349-352; these read GRPNAGKS, DTAGV, and NKMD. The 85-residue stretch at 405-489 folds into the KH-like domain; the sequence is VRIPTGQLNR…PMRVHFRSSH (85 aa).

This sequence belongs to the TRAFAC class TrmE-Era-EngA-EngB-Septin-like GTPase superfamily. EngA (Der) GTPase family. Associates with the 50S ribosomal subunit.

GTPase that plays an essential role in the late steps of ribosome biogenesis. This is GTPase Der from Nitratidesulfovibrio vulgaris (strain DP4) (Desulfovibrio vulgaris).